We begin with the raw amino-acid sequence, 555 residues long: CTP synthase (555 aa).

The interval 1–265 is amidoligase domain; the sequence is MTRYIFITGG…GNRVCEKLNI (265 aa). Serine 13 serves as a coordination point for CTP. Position 13 (serine 13) interacts with UTP. Residues 14–19 and aspartate 71 contribute to the ATP site; that span reads SLGKGI. The Mg(2+) site is built by aspartate 71 and glutamate 139. CTP is bound by residues 146–148, 186–191, and lysine 222; these read DIE and KTKPTQ. UTP is bound by residues 186 to 191 and lysine 222; that span reads KTKPTQ. The region spanning 290–541 is the Glutamine amidotransferase type-1 domain; that stretch reads TVAVVGKYVD…IKAGLAAKEA (252 aa). Glycine 351 contributes to the L-glutamine binding site. The active-site Nucleophile; for glutamine hydrolysis is cysteine 378. L-glutamine is bound by residues 379–382, glutamate 402, and arginine 469; that span reads LGMQ. Active-site residues include histidine 514 and glutamate 516.

It belongs to the CTP synthase family. Homotetramer.

The catalysed reaction is UTP + L-glutamine + ATP + H2O = CTP + L-glutamate + ADP + phosphate + 2 H(+). The enzyme catalyses L-glutamine + H2O = L-glutamate + NH4(+). It carries out the reaction UTP + NH4(+) + ATP = CTP + ADP + phosphate + 2 H(+). It participates in pyrimidine metabolism; CTP biosynthesis via de novo pathway; CTP from UDP: step 2/2. With respect to regulation, allosterically activated by GTP, when glutamine is the substrate; GTP has no effect on the reaction when ammonia is the substrate. The allosteric effector GTP functions by stabilizing the protein conformation that binds the tetrahedral intermediate(s) formed during glutamine hydrolysis. Inhibited by the product CTP, via allosteric rather than competitive inhibition. In terms of biological role, catalyzes the ATP-dependent amination of UTP to CTP with either L-glutamine or ammonia as the source of nitrogen. Regulates intracellular CTP levels through interactions with the four ribonucleotide triphosphates. The sequence is that of CTP synthase from Coxiella burnetii (strain CbuK_Q154) (Coxiella burnetii (strain Q154)).